Consider the following 82-residue polypeptide: ATP synthase subunit c (82 aa).

The next 2 helical transmembrane spans lie at 7-27 (LVAL…SIGI) and 53-73 (FILA…ALLF).

This sequence belongs to the ATPase C chain family. F-type ATPases have 2 components, F(1) - the catalytic core - and F(0) - the membrane proton channel. F(1) has five subunits: alpha(3), beta(3), gamma(1), delta(1), epsilon(1). F(0) has three main subunits: a(1), b(2) and c(10-14). The alpha and beta chains form an alternating ring which encloses part of the gamma chain. F(1) is attached to F(0) by a central stalk formed by the gamma and epsilon chains, while a peripheral stalk is formed by the delta and b chains.

The protein localises to the cell inner membrane. In terms of biological role, f(1)F(0) ATP synthase produces ATP from ADP in the presence of a proton or sodium gradient. F-type ATPases consist of two structural domains, F(1) containing the extramembraneous catalytic core and F(0) containing the membrane proton channel, linked together by a central stalk and a peripheral stalk. During catalysis, ATP synthesis in the catalytic domain of F(1) is coupled via a rotary mechanism of the central stalk subunits to proton translocation. Functionally, key component of the F(0) channel; it plays a direct role in translocation across the membrane. A homomeric c-ring of between 10-14 subunits forms the central stalk rotor element with the F(1) delta and epsilon subunits. This chain is ATP synthase subunit c, found in Acidovorax ebreus (strain TPSY) (Diaphorobacter sp. (strain TPSY)).